We begin with the raw amino-acid sequence, 199 residues long: dTTP/UTP pyrophosphatase (199 aa).

Residue Asp-73 is the Proton acceptor of the active site.

This sequence belongs to the Maf family. YhdE subfamily. A divalent metal cation serves as cofactor.

Its subcellular location is the cytoplasm. The enzyme catalyses dTTP + H2O = dTMP + diphosphate + H(+). The catalysed reaction is UTP + H2O = UMP + diphosphate + H(+). In terms of biological role, nucleoside triphosphate pyrophosphatase that hydrolyzes dTTP and UTP. May have a dual role in cell division arrest and in preventing the incorporation of modified nucleotides into cellular nucleic acids. This is dTTP/UTP pyrophosphatase from Caldicellulosiruptor bescii (strain ATCC BAA-1888 / DSM 6725 / KCTC 15123 / Z-1320) (Anaerocellum thermophilum).